Here is an 805-residue protein sequence, read N- to C-terminus: MKYDFSHTEKKWQAYWQEHGTFQAEEGQEKPKYYVLDMFPYPSGSGLHVGHLEGYTASDIVARYRRSRGNNVLHPMGWDAFGLPAEQYAIKTGTHPSLTTENNIRSFRETLQAMGFSYDWSREINTTDPGYFRWTQWIFLKLYEMGLAYQSEVDVNWCVELRAVLANEEVEEKIAEGLTVVRRPLRQWVLKITAYAERLLLDLDGLDWPENVKQMQRNWIGRSEGVEVDFELRCHRKMLRVYTTRPDTLFGATYLVISPEHPMAEKLATAPQLVEVKNYISKAKLKTELERTGLQKDKTGVFTGSYAINPANGEALPVWISDFVLTSYGTGAIMSVPAHDSRDWEFAKKFGLPIVEVVKSPHDVQDAVYEGKDSTAVNSSNSEISLDGLAFPEAFERMASWLELKKCGERKVNYRLRDWIFSRQRYWGEPIPVKHYEDGSLGTETDLPLRLPEVEAYQPTETGESPLANIPEWLYGTDGKGAFRRETNTMPQWAGSCWYYLRFIDPRNSEHLVDAEKEHYWMNVDLYIGGAEHAVLHLLYARFWHKVLYDLKVVSTKEPFQKLFNQGMILGEDGEKMSKSRGNVIPADHVLEKYGADAVRLYEMFLGPLEQVKPWNTNGIEGVSRFLNRVWRLVHPDTEGPAAVLDEAAMPGELLRRMHKTVKKVREDTECLKFNTAIAEMMVFVNDLHRTGNRNREAIETLVLLLAPYAPHISEELWEALGHPESIARAPFPTFDPALAANDVLTIAVQVNGKLRGTFEAAKDASKEEMLEAARAVESVRKFIEGSTVVKEIVVPGKLINFAVK.

A 'HIGH' region motif is present at residues 40–51 (PYPSGSGLHVGH). A 'KMSKS' region motif is present at residues 576 to 580 (KMSKS). Residue K579 participates in ATP binding.

Belongs to the class-I aminoacyl-tRNA synthetase family.

It localises to the cytoplasm. It carries out the reaction tRNA(Leu) + L-leucine + ATP = L-leucyl-tRNA(Leu) + AMP + diphosphate. The chain is Leucine--tRNA ligase from Chlorobium luteolum (strain DSM 273 / BCRC 81028 / 2530) (Pelodictyon luteolum).